The sequence spans 232 residues: Cytidylate kinase (232 aa).

19 to 27 (GPAGVGKTT) is a binding site for ATP.

The protein belongs to the cytidylate kinase family. Type 1 subfamily.

It localises to the cytoplasm. It catalyses the reaction CMP + ATP = CDP + ADP. The enzyme catalyses dCMP + ATP = dCDP + ADP. This is Cytidylate kinase from Nitratidesulfovibrio vulgaris (strain ATCC 29579 / DSM 644 / CCUG 34227 / NCIMB 8303 / VKM B-1760 / Hildenborough) (Desulfovibrio vulgaris).